A 1377-amino-acid polypeptide reads, in one-letter code: Hemoglobin-binding protease hbp autotransporter (1377 aa).

A signal peptide spans 1 to 52; it reads MNRIYSLRYSAVARGFIAVSEFARKCVHKSVRRLCFPVLLLIPVLFSAGSLA. One can recognise a Peptidase S6 domain in the interval 53 to 302; sequence GTVNNELGYQ…AVIPLDFIGQ (250 aa). Active-site charge relay system residues include His125, Asp153, and Ser259. Residues 1111–1377 enclose the Autotransporter domain; that stretch reads DINGEAGTWV…AINANIRYSF (267 aa).

Cleaved to release the mature protein from the outer membrane.

It localises to the periplasm. The protein localises to the secreted. The protein resides in the cell surface. Its subcellular location is the cell outer membrane. Its activity is regulated as follows. Protease activity is inhibited by 3,4-dichloroisocoumarin. In terms of biological role, interacts with hemoglobin, degrades it and subsequently binds the released heme. Could make heme accessible not only for E.coli, but also for B.fragilis during mixed intra-abdominal infections. Has a role in abscess formation. The protein is Hemoglobin-binding protease hbp autotransporter (hbp) of Escherichia coli.